Reading from the N-terminus, the 466-residue chain is Cysteine--tRNA ligase (466 aa).

Cys-29 provides a ligand contact to Zn(2+). The 'HIGH' region signature appears at 31–41 (PTVYNYIHIGN). The Zn(2+) site is built by Cys-209, His-234, and Glu-238. The short motif at 266-270 (KMSKS) is the 'KMSKS' region element. Lys-269 is an ATP binding site. Ser-270 bears the Phosphoserine mark.

It belongs to the class-I aminoacyl-tRNA synthetase family. Monomer. The cofactor is Zn(2+).

The protein localises to the cytoplasm. It catalyses the reaction tRNA(Cys) + L-cysteine + ATP = L-cysteinyl-tRNA(Cys) + AMP + diphosphate. The polypeptide is Cysteine--tRNA ligase (cysS) (Halalkalibacterium halodurans (strain ATCC BAA-125 / DSM 18197 / FERM 7344 / JCM 9153 / C-125) (Bacillus halodurans)).